A 93-amino-acid polypeptide reads, in one-letter code: Ferredoxin-2 (93 aa).

The 2Fe-2S ferredoxin-type domain occupies 2–91 (YKVTLKTPDG…DVVIETHKED (90 aa)). [2Fe-2S] cluster is bound by residues cysteine 37, cysteine 42, cysteine 45, and cysteine 75.

It belongs to the 2Fe2S plant-type ferredoxin family. [2Fe-2S] cluster serves as cofactor.

It is found in the plastid. The protein localises to the chloroplast. Its function is as follows. Ferredoxins are iron-sulfur proteins that transfer electrons in a wide variety of metabolic reactions. This is Ferredoxin-2 from Equisetum arvense (Field horsetail).